Reading from the N-terminus, the 450-residue chain is Cysteine protease ATG4C (450 aa).

Cys112 (nucleophile) is an active-site residue. Active-site residues include Asp336 and His338.

The protein belongs to the peptidase C54 family.

The protein resides in the cytoplasm. The enzyme catalyses [protein]-C-terminal L-amino acid-glycyl-phosphatidylethanolamide + H2O = [protein]-C-terminal L-amino acid-glycine + a 1,2-diacyl-sn-glycero-3-phosphoethanolamine. Its function is as follows. Cysteine protease that plays a key role in autophagy by mediating both proteolytic activation and delipidation of ATG8 family proteins. The protease activity is required for proteolytic activation of ATG8 family proteins: cleaves the C-terminal amino acid of ATG8 proteins to reveal a C-terminal glycine. Exposure of the glycine at the C-terminus is essential for ATG8 proteins conjugation to phosphatidylethanolamine (PE) and insertion to membranes, which is necessary for autophagy. In addition to the protease activity, also mediates delipidation of ATG8 family proteins. Catalyzes delipidation of PE-conjugated forms of ATG8 proteins during macroautophagy. The protein is Cysteine protease ATG4C of Xenopus tropicalis (Western clawed frog).